Reading from the N-terminus, the 521-residue chain is Replicase polyprotein 1ab (521 aa).

In terms of domain architecture, AV-Nsp11N/CoV-Nsp15M spans 1-58; sequence GGGGQSFLAADNAVLVSTQCYKRHSYVEIPSNLLVQNGMSLKDGANLYVYKRVNGAFV. In terms of domain architecture, NendoU spans 75–216; the sequence is EPRSDVERDF…EDGSIKTCYP (142 aa). Residues His-104, His-119, Lys-159, Lys-263, Asp-347, Lys-391, and Glu-424 contribute to the active site. Residues 219 to 518 form the Nidovirus-type SAM-dependent 2'-O-MTase domain; it reads QSAWTCGYNM…NTSFTSDSFV (300 aa).

In terms of biological role, the replicase polyprotein of coronaviruses is a multifunctional protein: it contains the activities necessary for the transcription of negative stranded RNA, leader RNA, subgenomic mRNAs and progeny virion RNA as well as proteinases responsible for the cleavage of the polyprotein into functional products. NendoU is a Mn(2+)-dependent, uridylate-specific enzyme, which leaves 2'-3'-cyclic phosphates 5' to the cleaved bond. The chain is Replicase polyprotein 1ab (rep) from Gallus gallus (Chicken).